A 1011-amino-acid chain; its full sequence is Liprin-beta-1 (1011 aa).

S37 carries the phosphoserine modification. T39 is subject to Phosphothreonine. S40 is subject to Phosphoserine. Positions 156–405 (QQELLSRTSL…VPEEFHTTIL (250 aa)) form a coiled coil. K322 is modified (N6-acetyllysine). Disordered stretches follow at residues 420-439 (ETSE…EEND) and 463-634 (KSSS…RDLG). A phosphoserine mark is found at S434 and S466. Over residues 470 to 492 (LKKETSDGEKETIQKTSEDRAPA) the composition is skewed to basic and acidic residues. Residue K471 forms a Glycyl lysine isopeptide (Lys-Gly) (interchain with G-Cter in SUMO2) linkage. Phosphoserine occurs at positions 523 and 540. Basic and acidic residues predominate over residues 546-556 (ETEKETAEHLD). At S579 the chain carries Phosphoserine. Residues 584 to 598 (KKSRGIMKLFGKLRR) are compositionally biased toward basic residues. 2 positions are modified to phosphoserine: S601 and S636. 2 SAM domains span residues 647–711 (WTKE…LGSE) and 719–782 (LDFN…LRIN). A Phosphoserine modification is found at S794. In terms of domain architecture, SAM 3 spans 804–876 (VQKWTNHRVM…ATHFNLLIGA (73 aa)). A phosphoserine mark is found at S999, S1001, and S1003. T1005 is subject to Phosphothreonine.

The protein belongs to the liprin family. Liprin-beta subfamily. In terms of assembly, forms homodimers and heterodimers. Interacts with S100A4 in a Ca(2+)-dependent mode. Part of a cortical microtubule stabilization complex (CMSC) composed of KANK1, PPFIA1, PPFIBP1, ERC1/ELKS, PHLDB2/LL5beta, CLASPs, KIF21A and possibly additional interactors; within CMSCs KANK1 and PHLDB2/LL5beta seem to be the core components for recruiting microtubule-binding proteins KIF21A and CLASPs, whereas PPFIA1, PPFIBP1 and ERC1/ELKS serve as scaffolds for protein clustering. Interacts with KANK1 (via CC1 domain, residues 244-339). As to expression, widely expressed. Absent in liver.

It is found in the cytoplasm. It localises to the cell cortex. Functionally, may regulate the disassembly of focal adhesions. Did not bind receptor-like tyrosine phosphatases type 2A. This chain is Liprin-beta-1 (PPFIBP1), found in Homo sapiens (Human).